The primary structure comprises 565 residues: MTTREFDYIICGAGSAGNVLATRLTEDPGVTVLLLEAGGPDYRFDFRTQMPAALAYPLQGRRYNWAYETDPEPHMNHRRMECGRGKGLGGSSLINGMCYIRGNALDYDNWATHKGLEDWAYLDCLPYFRKAETRDVGPNDYHGGDGPVSVTTSKPGVNPLFEAMVEAGVQAGYPRTDDLNGYQQEGFGPMDRTVTPRGRRASTARGYLDQARARPNLEIVTHALADRILFSGKRATGVTFLHGSARVTAHARREVLVCSGAIASPQLLQRSGVGPGEWLRELDIPVVLDLPGVGRNLQDHLEMYIQFECKEPVSLYPALKWWNQPKIGLEWMLNGTGLGASNHFEAGGFIRTRDDDPWPNIQYHFLPVAINYNGSNAIEMHGFQAHVGSMRSPSCGRVKLKSRDPHAHPSILFNYMAEALDWREFRDAIRATREIMRQPALDRFRGRELNPGADLKSDNELDTFVRARAETAFHPSCSCKMGYDDMAVVDNEGRVHGIDGLRVVDASIMPIITTGNLNAPTIMIAEKIADRIRKHKPLERSNAQYYVANGAPARGGKPARAPAVV.

7-36 contributes to the FAD binding site; that stretch reads DYIICGAGSAGNVLATRLTEDPGVTVLLLE. The Proton acceptor role is filled by His474.

Belongs to the GMC oxidoreductase family. The cofactor is FAD.

It carries out the reaction choline + A = betaine aldehyde + AH2. The enzyme catalyses betaine aldehyde + NAD(+) + H2O = glycine betaine + NADH + 2 H(+). It functions in the pathway amine and polyamine biosynthesis; betaine biosynthesis via choline pathway; betaine aldehyde from choline (cytochrome c reductase route): step 1/1. Involved in the biosynthesis of the osmoprotectant glycine betaine. Catalyzes the oxidation of choline to betaine aldehyde and betaine aldehyde to glycine betaine at the same rate. This chain is Oxygen-dependent choline dehydrogenase, found in Burkholderia mallei (strain ATCC 23344).